The primary structure comprises 485 residues: Glutamyl-tRNA(Gln) amidotransferase subunit A (485 aa).

Catalysis depends on charge relay system residues K78 and S153. The Acyl-ester intermediate role is filled by S177.

It belongs to the amidase family. GatA subfamily. In terms of assembly, heterotrimer of A, B and C subunits.

The enzyme catalyses L-glutamyl-tRNA(Gln) + L-glutamine + ATP + H2O = L-glutaminyl-tRNA(Gln) + L-glutamate + ADP + phosphate + H(+). In terms of biological role, allows the formation of correctly charged Gln-tRNA(Gln) through the transamidation of misacylated Glu-tRNA(Gln) in organisms which lack glutaminyl-tRNA synthetase. The reaction takes place in the presence of glutamine and ATP through an activated gamma-phospho-Glu-tRNA(Gln). The protein is Glutamyl-tRNA(Gln) amidotransferase subunit A of Bacillus cereus (strain Q1).